A 385-amino-acid polypeptide reads, in one-letter code: 1-deoxy-D-xylulose 5-phosphate reductoisomerase (385 aa).

The NADPH site is built by threonine 10, glycine 11, isoleucine 13, glycine 36, and asparagine 38. Lysine 123 is a binding site for 1-deoxy-D-xylulose 5-phosphate. Position 124 (glutamate 124) interacts with NADPH. Residue aspartate 148 coordinates Mn(2+). The 1-deoxy-D-xylulose 5-phosphate site is built by serine 149, glutamate 150, serine 172, and histidine 195. Glutamate 150 is a Mn(2+) binding site. Glycine 201 contributes to the NADPH binding site. Serine 208, asparagine 213, lysine 214, and glutamate 217 together coordinate 1-deoxy-D-xylulose 5-phosphate. Glutamate 217 contacts Mn(2+).

Belongs to the DXR family. Requires Mg(2+) as cofactor. Mn(2+) serves as cofactor.

The enzyme catalyses 2-C-methyl-D-erythritol 4-phosphate + NADP(+) = 1-deoxy-D-xylulose 5-phosphate + NADPH + H(+). Its pathway is isoprenoid biosynthesis; isopentenyl diphosphate biosynthesis via DXP pathway; isopentenyl diphosphate from 1-deoxy-D-xylulose 5-phosphate: step 1/6. Its function is as follows. Catalyzes the NADPH-dependent rearrangement and reduction of 1-deoxy-D-xylulose-5-phosphate (DXP) to 2-C-methyl-D-erythritol 4-phosphate (MEP). The sequence is that of 1-deoxy-D-xylulose 5-phosphate reductoisomerase from Anaplasma phagocytophilum (strain HZ).